The primary structure comprises 457 residues: Argininosuccinate lyase (457 aa).

This sequence belongs to the lyase 1 family. Argininosuccinate lyase subfamily.

Its subcellular location is the cytoplasm. It catalyses the reaction 2-(N(omega)-L-arginino)succinate = fumarate + L-arginine. The protein operates within amino-acid biosynthesis; L-arginine biosynthesis; L-arginine from L-ornithine and carbamoyl phosphate: step 3/3. The protein is Argininosuccinate lyase of Histophilus somni (strain 129Pt) (Haemophilus somnus).